Consider the following 328-residue polypeptide: GTPase Obg (328 aa).

Residues 2 to 160 form the Obg domain; that stretch reads YNFKDSVSIT…LNVRLELFLV (159 aa). An OBG-type G domain is found at 161-326; sequence ADIGLVGLPN…LIKEFFVLAK (166 aa). GTP is bound by residues 167–174, 192–196, 213–216, 280–283, and 307–309; these read GLPNAGKS, FTTKI, DIPG, NKLD, and SIY. Mg(2+) is bound by residues S174 and T194.

This sequence belongs to the TRAFAC class OBG-HflX-like GTPase superfamily. OBG GTPase family. Monomer. Mg(2+) is required as a cofactor.

Its subcellular location is the cytoplasm. Functionally, an essential GTPase which binds GTP, GDP and possibly (p)ppGpp with moderate affinity, with high nucleotide exchange rates and a fairly low GTP hydrolysis rate. Plays a role in control of the cell cycle, stress response, ribosome biogenesis and in those bacteria that undergo differentiation, in morphogenesis control. The sequence is that of GTPase Obg from Borreliella afzelii (strain PKo) (Borrelia afzelii).